Here is a 205-residue protein sequence, read N- to C-terminus: Protein GrpE (205 aa).

The protein belongs to the GrpE family. In terms of assembly, homodimer.

The protein resides in the cytoplasm. Its function is as follows. Participates actively in the response to hyperosmotic and heat shock by preventing the aggregation of stress-denatured proteins, in association with DnaK and GrpE. It is the nucleotide exchange factor for DnaK and may function as a thermosensor. Unfolded proteins bind initially to DnaJ; upon interaction with the DnaJ-bound protein, DnaK hydrolyzes its bound ATP, resulting in the formation of a stable complex. GrpE releases ADP from DnaK; ATP binding to DnaK triggers the release of the substrate protein, thus completing the reaction cycle. Several rounds of ATP-dependent interactions between DnaJ, DnaK and GrpE are required for fully efficient folding. The sequence is that of Protein GrpE from Shewanella loihica (strain ATCC BAA-1088 / PV-4).